A 370-amino-acid chain; its full sequence is Anhydro-N-acetylmuramic acid kinase (370 aa).

13–20 (GTSMDGID) contributes to the ATP binding site.

Belongs to the anhydro-N-acetylmuramic acid kinase family.

It carries out the reaction 1,6-anhydro-N-acetyl-beta-muramate + ATP + H2O = N-acetyl-D-muramate 6-phosphate + ADP + H(+). The protein operates within amino-sugar metabolism; 1,6-anhydro-N-acetylmuramate degradation. It functions in the pathway cell wall biogenesis; peptidoglycan recycling. Catalyzes the specific phosphorylation of 1,6-anhydro-N-acetylmuramic acid (anhMurNAc) with the simultaneous cleavage of the 1,6-anhydro ring, generating MurNAc-6-P. Is required for the utilization of anhMurNAc either imported from the medium or derived from its own cell wall murein, and thus plays a role in cell wall recycling. The sequence is that of Anhydro-N-acetylmuramic acid kinase from Rhizobium etli (strain ATCC 51251 / DSM 11541 / JCM 21823 / NBRC 15573 / CFN 42).